A 316-amino-acid chain; its full sequence is Pleckstrin homology domain-containing family F member 1 homolog (316 aa).

The PH domain maps to 35–131; sequence VLVGEGVLTK…WMAHINKCVE (97 aa). Residues 152-212 form an FYVE-type zinc finger; the sequence is DTDASVCMHC…VCDACYERLK (61 aa). C158, C161, C175, C178, C183, C186, C204, and C207 together coordinate Zn(2+). The segment at 215 to 316 is disordered; it reads PSSLGSGEDS…AAVATTGSHC (102 aa). Acidic residues predominate over residues 244-253; it reads SNDEDSDEET. Residues 279–292 are compositionally biased toward low complexity; the sequence is SSTITSPSSATTGS. Over residues 298–316 the composition is skewed to polar residues; that stretch reads VTPSVQSSPAAVATTGSHC.

As to quaternary structure, interacts with Gdi (Rab GDP dissociation inhibitor). As to expression, in ovaries, expressed both in the germ line cells and in the overlying somatic follicular epithelium.

Its subcellular location is the apical cell membrane. The protein localises to the endosome membrane. The protein resides in the cytoplasm. It localises to the cell cortex. Functionally, functions in the regulation of endosome morphology and late endosome formation. Has a role in controlling trafficking from early to late endosomes and from late endosomes to lysosomes. Important for localization of Gdi to the endosomal membranes. May function in controlling the activity of multiple regulators in the endocytic pathway, perhaps by positively controlling those involved in the early steps of endocytosis such as Rab5 and hrs, and negative regulating those involved in the late stages of endocytosis like car and VhaSFD. This is Pleckstrin homology domain-containing family F member 1 homolog from Drosophila melanogaster (Fruit fly).